A 506-amino-acid chain; its full sequence is Lysine--tRNA ligase (506 aa).

Glu-416 and Glu-423 together coordinate Mg(2+).

It belongs to the class-II aminoacyl-tRNA synthetase family. Homodimer. Mg(2+) is required as a cofactor.

It is found in the cytoplasm. The catalysed reaction is tRNA(Lys) + L-lysine + ATP = L-lysyl-tRNA(Lys) + AMP + diphosphate. In Pelotomaculum thermopropionicum (strain DSM 13744 / JCM 10971 / SI), this protein is Lysine--tRNA ligase.